The sequence spans 892 residues: MAVARSLRSGESGPRTGSEIRTAFLTFFAERAHQVIPSASLVPEDPTVLLTIAGMLPFKPVFMGQAERPAPRATSSQKCIRTNDIENVGRTARHHTFFEMLGNFSFGDYFKQQAIEWAWELSTEVFGLNPKNLVVSVFREDDEAEAIWRDVVGVNPKRIIRMDEADNFWASGPTGPCGPCSEIYYDFKPDLGNDDIDLEDDGRFVEFYNLVFMQYNRDGEGNLTPLANRNIDTGMGLERMAQILQGVPNNYETDIIYPLIETAAGLAGLDYQKLDDKGKTSFKVIGDHCRAITHLICDGVTASNLGRGYIMRRLLRRVVRHGRLVGIEKPFLQAMGEAAIALMVEAYPQLEERRKLILAELNREEARFLETLERGEKVLADVLVANPQMISGGQAFELYDTYGFPLELTQEIAEEHGLTVDLQGFEQAMDQQRQRAKAAAVSIDLTLQGAIEQMAAELEATRFKGYQVLEQPCCVLALVVNGESAERASAGDNVQIVLDTTPFYGESGGQVGDHGVLSGEGSGGNGVIVAVDDVSRHRNVFVHFGRIERGTLALGDLVNAQVDRACRRRAQANHTATHLLQAALKQVVDSGIGQAGSLVDFDRLRFDFHCSRAVTAKELEQIEALINGWIMESHDLIVEEMSIQEAKAAGAVAMFGEKYADVVRVVDVPGVSMELCGGTHVANTAEIGLFKIVAESSVAAGIRRIEAVAGPAVLAYLNERDVVVKELGDRFKAQPSEIIERVISLQEELKSSQKALTAARAELAVAKSAALATQAVAVGEYQLLVARLDGVEGAGLQNAAQGLLDQLGDATAVVLGGLPDPSDEGKVILVAAFGKQVIAQGQQAGKFIGSIAKRCGGGGGGRPNLAQAGGRDGAALDGALEAAKVELKQSLG.

Zn(2+) is bound by residues His574, His578, Cys676, and His680.

It belongs to the class-II aminoacyl-tRNA synthetase family. Zn(2+) serves as cofactor.

Its subcellular location is the cytoplasm. It catalyses the reaction tRNA(Ala) + L-alanine + ATP = L-alanyl-tRNA(Ala) + AMP + diphosphate. Functionally, catalyzes the attachment of alanine to tRNA(Ala) in a two-step reaction: alanine is first activated by ATP to form Ala-AMP and then transferred to the acceptor end of tRNA(Ala). Also edits incorrectly charged Ser-tRNA(Ala) and Gly-tRNA(Ala) via its editing domain. This chain is Alanine--tRNA ligase, found in Prochlorococcus marinus (strain MIT 9303).